The following is a 252-amino-acid chain: Ubiquinone biosynthesis O-methyltransferase (252 aa).

S-adenosyl-L-methionine is bound by residues arginine 41, glycine 72, aspartate 93, and methionine 136.

Belongs to the methyltransferase superfamily. UbiG/COQ3 family.

The enzyme catalyses a 3-demethylubiquinol + S-adenosyl-L-methionine = a ubiquinol + S-adenosyl-L-homocysteine + H(+). It carries out the reaction a 3-(all-trans-polyprenyl)benzene-1,2-diol + S-adenosyl-L-methionine = a 2-methoxy-6-(all-trans-polyprenyl)phenol + S-adenosyl-L-homocysteine + H(+). It participates in cofactor biosynthesis; ubiquinone biosynthesis. O-methyltransferase that catalyzes the 2 O-methylation steps in the ubiquinone biosynthetic pathway. The chain is Ubiquinone biosynthesis O-methyltransferase from Rhizobium leguminosarum bv. trifolii (strain WSM2304).